Consider the following 359-residue polypeptide: Membrane-bound lytic murein transglycosylase C (359 aa).

The first 16 residues, 1 to 16, serve as a signal peptide directing secretion; the sequence is MKKVLALALIAPLLIS. Cys17 carries the N-palmitoyl cysteine lipid modification. Cys17 is lipidated: S-diacylglycerol cysteine.

It belongs to the transglycosylase Slt family.

It localises to the cell outer membrane. It carries out the reaction Exolytic cleavage of the (1-&gt;4)-beta-glycosidic linkage between N-acetylmuramic acid (MurNAc) and N-acetylglucosamine (GlcNAc) residues in peptidoglycan, from either the reducing or the non-reducing ends of the peptidoglycan chains, with concomitant formation of a 1,6-anhydrobond in the MurNAc residue.. Murein-degrading enzyme. May play a role in recycling of muropeptides during cell elongation and/or cell division. The protein is Membrane-bound lytic murein transglycosylase C of Edwardsiella ictaluri (strain 93-146).